A 132-amino-acid polypeptide reads, in one-letter code: MNQPELSYYGTGRRKSSVARVTLKHGNGQFKINNRVAKEYLKSDILIKDALQPLSITNTVSEFNIRVNAHGGGISGQAGAIRLGIARALLKVSADYRPGLKVAGMLTRDARAKERKKFGLRKARRARQFSKR.

This sequence belongs to the universal ribosomal protein uS9 family.

This chain is Small ribosomal subunit protein uS9, found in Mesomycoplasma hyopneumoniae (strain 232) (Mycoplasma hyopneumoniae).